The chain runs to 474 residues: Glutamate--tRNA ligase (474 aa).

The 'HIGH' region motif lies at 9–19 (PSPTGLLHMGG). The 'KMSKS' region motif lies at 238–242 (KLSKR). Lys-241 lines the ATP pocket.

This sequence belongs to the class-I aminoacyl-tRNA synthetase family. Glutamate--tRNA ligase type 1 subfamily. Monomer.

Its subcellular location is the cytoplasm. It catalyses the reaction tRNA(Glu) + L-glutamate + ATP = L-glutamyl-tRNA(Glu) + AMP + diphosphate. Functionally, catalyzes the attachment of glutamate to tRNA(Glu) in a two-step reaction: glutamate is first activated by ATP to form Glu-AMP and then transferred to the acceptor end of tRNA(Glu). This is Glutamate--tRNA ligase from Buchnera aphidicola subsp. Cinara cedri (strain Cc).